The primary structure comprises 100 residues: Large ribosomal subunit protein bL27 (100 aa).

Positions 1-9 (MIIMNLQIF) are excised as a propeptide. The tract at residues 13–32 (KGMGSSKNGRDSESKRLGTK) is disordered.

The protein belongs to the bacterial ribosomal protein bL27 family. Post-translationally, the N-terminus is cleaved by ribosomal processing cysteine protease Prp.

The protein is Large ribosomal subunit protein bL27 of Clostridium kluyveri (strain ATCC 8527 / DSM 555 / NBRC 12016 / NCIMB 10680 / K1).